Reading from the N-terminus, the 269-residue chain is Phosphate import ATP-binding protein PstB (269 aa).

In terms of domain architecture, ABC transporter spans 23-264 (IATRNLEFYY…PSKQQTEDYI (242 aa)). 55–62 (GPSGCGKS) is a binding site for ATP.

Belongs to the ABC transporter superfamily. Phosphate importer (TC 3.A.1.7) family. In terms of assembly, the complex is composed of two ATP-binding proteins (PstB), two transmembrane proteins (PstC and PstA) and a solute-binding protein (PstS).

Its subcellular location is the cell inner membrane. The enzyme catalyses phosphate(out) + ATP + H2O = ADP + 2 phosphate(in) + H(+). In terms of biological role, part of the ABC transporter complex PstSACB involved in phosphate import. Responsible for energy coupling to the transport system. The polypeptide is Phosphate import ATP-binding protein PstB (Xylella fastidiosa (strain Temecula1 / ATCC 700964)).